Here is a 362-residue protein sequence, read N- to C-terminus: Neisseria adhesin A (362 aa).

Positions 1 to 23 (MKHFPSKVLTTAILATFCSGALA) are cleaved as a signal peptide. A head domain region spans residues 24-169 (ATSDDDVKKA…NIVKIDEKLE (146 aa)). Coiled coils occupy residues 90-146 (VTNL…LNKL) and 183-288 (NDIA…KETR). The interval 170 to 307 (AVADTVDKHA…SGLFQPYNVG (138 aa)) is coiled stalk domain. 4 consecutive transmembrane segments (beta stranded) span residues 307-317 (GRFNVTAAVGG), 321-332 (ESAVAIGTGFRF), 339-345 (KAGVAVG), and 351-362 (SAAYHVGVNYEW). The interval 308-362 (RFNVTAAVGGYKSESAVAIGTGFRFTENFAAKAGVAVGTSSGSSAAYHVGVNYEW) is translocator domain.

This sequence belongs to the autotransporter-2 (AT-2) (TC 1.B.40) family. In terms of assembly, forms high molecular weight oligomers in whole cell extracts that are not disrupted by boiling in SDS buffer. Homotrimer. A fragment containing the N-terminal half of the mature protein (residues 24-210, head domain plus part of the stalk) binds human integrin beta-1 (ITGB1). It was not seen to bind immobilized purified CEACAMs 1, 3, 5, 6 or 8 nor commercially prepared type I collagen, fibronectin or matrigel.

The protein localises to the cell surface. The protein resides in the cell outer membrane. Functionally, adheres to and induces bacterial uptake by human epithelial cells. Upon expression in engineered Y.enterocolitica confers an 11- to 15-fold increase in bacterial adherence and uptake by human epithelial cell lines; part of the uptake is mediated by integrin beta-1 (ITGB1) suggesting it may be a human receptor for NadA. A bacterial cell surface protein; antisera against this protein induce complement-mediated killing of this and other strains. This is Neisseria adhesin A from Neisseria meningitidis serogroup B (strain ATCC BAA-335 / MC58).